Reading from the N-terminus, the 669-residue chain is Potassium voltage-gated channel subfamily KQT member 1 (669 aa).

The Cytoplasmic segment spans residues 1 to 120 (MDTASSPPNA…YNFLERPTGW (120 aa)). Ser27 carries the phosphoserine; by PKA modification. The helical transmembrane segment at 121–142 (KCFVYHFTVFLIVLVCLIFSVL) threads the bilayer. The Extracellular segment spans residues 143–153 (STIEQYAALAT). A helical membrane pass occupies residues 154 to 176 (GTLFWMEIVLVVFFGTEYVVRLW). The Cytoplasmic portion of the chain corresponds to 177 to 192 (SAGCRSKYVGIWGRLR). Residues 193–218 (FARKPISIIDLIVVVASMVVLCVGSK) traverse the membrane as a helical segment. Residues 219–226 (GQVFATSA) lie on the Extracellular side of the membrane. A helical; Voltage-sensor membrane pass occupies residues 227 to 242 (IRGIRFLQILRMLHVD). The interval 238-246 (MLHVDRQGG) is interaction with KCNE3. The Cytoplasmic portion of the chain corresponds to 243–260 (RQGGTWRLLGSVVFIHRQ). A 1,2-diacyl-sn-glycero-3-phospho-(1D-myo-inositol-4,5-bisphosphate) is bound at residue Gln244. The helical transmembrane segment at 261–283 (ELITTLYIGFLGLIFSSYFVYLA) threads the bilayer. Over 284-299 (EKDAVNESGRIEFGSY) the chain is Extracellular. Asn289 carries N-linked (GlcNAc...) asparagine glycosylation. Positions 300-320 (ADALWWGVVTVTTIGYGDKVP) form an intramembrane region, pore-forming. The Extracellular segment spans residues 321–322 (QT). The helical transmembrane segment at 323–348 (WVGKTIASCFSVFAISFFALPAGILG) threads the bilayer. Over 349–669 (SGFALKVQQK…VPQTGPDEGS (321 aa)) the chain is Cytoplasmic. Positions 370–382 (AAASLIQTAWRCY) are interaction with CALM. Phosphoserine occurs at positions 407 and 409. Residues 515 to 529 (KVIRRMQYFVAKKKF) are interaction with CALM; calcium-dependent. Residues 535-572 (PYDVRDVIEQYSQGHLNLMVRIKELQRRLDQSIGKPSL) are interaction with KCNE1 C-terminus. A coiled-coil region spans residues 585 to 621 (SNTIGARLNRVEDKVTQLDQRLVIITDMLHQLLSLQQ). Positions 588-616 (IGARLNRVEDKVTQLDQRLVIITDMLHQL) are interaction with AKAP9. Residues 589–620 (GARLNRVEDKVTQLDQRLVIITDMLHQLLSLQ) are C-terminal assembly domain (tetramerization).

The protein belongs to the potassium channel family. KQT (TC 1.A.1.15) subfamily. Kv7.1/KCNQ1 sub-subfamily. As to quaternary structure, tetramer. Heterotetramer with KCNE1; targets to the membrane raft. Interacts (via C-terminus) with CALM; forms a heterooctameric structure (with 4:4 KCNQ1:CALM stoichiometry) in a calcium-independent manner. Interacts with AKAP9; targets protein kinase A (PKA) catalytic and regulatory subunits and protein phosphatase 1 (PP1) to the KCNQ1-KCNE1 complex, allowing PKA-mediated phosphorylation and increase of delayed rectifier potassium channel activity. Interacts with KCNE2; form a heterooligomer complex that targets to the membrane raft and leading to currents with an apparently instantaneous activation, a rapid deactivation process and a linear current-voltage relationship and decreases the amplitude of the outward current. Interacts with AP2M1; mediates estrogen-induced internalization via clathrin-coated vesicles. Interacts with NEDD4L; promotes internalization and decreases I(Ks) currents. Interacts with USP2; counteracts the NEDD4L-specific down-regulation of I(Ks) and restore plasma membrane localization. Heterotetramer with KCNQ5; has a voltage-gated potassium channel activity. Interacts with KCNE3; produces a current with nearly instantaneous activation with a linear current-voltage relationship and alters membrane raft localization. Interacts with KCNE4; impairs KCNQ1 localization in lipid rafts and inhibits voltage-gated potassium channel activity. Interacts with KCNE5; impairs KCNQ1 localization in lipid rafts and only conducts current upon strong and continued depolarization. Interacts with SLC5A3; forms coregulatory channel-transporter complexes that modulate Na(+)-coupled myo-inositol influx through the transporter. In terms of processing, phosphorylation at Ser-27 by PKA; increases delayed rectifier potassium channel activity of the KCNQ1-KCNE1 complex through a macromolecular complex that includes PKA, PP1, and the targeting protein AKAP9. Ubiquitinated by NEDD4L; promotes internalization. The ubiquitinylated form is internalized through a clathrin-mediated endocytosis by interacting with AP2M1 and is recycled back to the cell membrane via RAB4A and RAB11A. Post-translationally, deubiquitinated by USP2; counteracts the NEDD4L-specific down-regulation of I(Ks) and restores the membrane localization.

The protein resides in the cell membrane. It localises to the cytoplasmic vesicle membrane. It is found in the early endosome. Its subcellular location is the membrane raft. The protein localises to the endoplasmic reticulum. The protein resides in the basolateral cell membrane. It localises to the apical cell membrane. It carries out the reaction K(+)(in) = K(+)(out). With respect to regulation, PIP2 molecule is essential to activate KCNQ channels by inducing the coupling of the voltage-sensing domain (VSD) and the pore-forming domain (PD). Upon channel activation, PIP2 disrupts the VSD-calmodulin/CALM interactions, causing the release of CALM from the VSD which triggers the opening of the gate. Calcium potentiates KCNQ1 channel current through calcium-bound CALM. Calcium-bound CALM competes with PIP2 to stabilize the channel open state. Functionally, pore-forming subunit of the voltage-gated potassium (Kv) channel involved in the regulation of cardiomyocyte excitability and important in normal development and functions of myocardium, inner ear, stomach and colon. Associates with KCNE beta subunits that modulates current kinetics. Induces a voltage-dependent by rapidly activating and slowly deactivating potassium-selective outward current. Also promotes a delayed voltage activated potassium current showing outward rectification characteristic. During beta-adrenergic receptor stimulation participates in cardiac repolarization by associating with KCNE1 to form the I(Ks) cardiac potassium current that increases the amplitude and slows down the activation kinetics of outward potassium current I(Ks). Muscarinic agonist oxotremorine-M strongly suppresses KCNQ1/KCNE1 current. When associated with KCNE3, forms the potassium channel that is important for cyclic AMP-stimulated intestinal secretion of chloride ions. This interaction with KCNE3 is reduced by 17beta-estradiol, resulting in the reduction of currents. During conditions of increased substrate load, maintains the driving force for proximal tubular and intestinal sodium ions absorption, gastric acid secretion, and cAMP-induced jejunal chloride ions secretion. Allows the provision of potassium ions to the luminal membrane of the secretory canaliculus in the resting state as well as during stimulated acid secretion. When associated with KCNE2, forms a heterooligomer complex leading to currents with an apparently instantaneous activation, a rapid deactivation process and a linear current-voltage relationship and decreases the amplitude of the outward current. When associated with KCNE4, inhibits voltage-gated potassium channel activity. When associated with KCNE5, this complex only conducts current upon strong and continued depolarization. Also forms a heterotetramer with KCNQ5 that has a voltage-gated potassium channel activity. Binds with phosphatidylinositol 4,5-bisphosphate. KCNQ1-KCNE2 channel associates with Na(+)-coupled myo-inositol symporter in the apical membrane of choroid plexus epithelium and regulates the myo-inositol gradient between blood and cerebrospinal fluid with an impact on neuron excitability. The sequence is that of Potassium voltage-gated channel subfamily KQT member 1 from Rattus norvegicus (Rat).